Here is a 1806-residue protein sequence, read N- to C-terminus: Focadhesin (1806 aa).

A disordered region spans residues 733–760 (ARPIPKQPEVEDEVKQNEEENEEEEDIS).

The protein localises to the cell junction. It is found in the focal adhesion. The protein resides in the cytoplasm. Its subcellular location is the cytosol. Required for the maintenance of SKIC2 and SKIC3 proteostatic levels in the liver. May be involved in the regulation of RNA degradation by the exosome complex. This chain is Focadhesin (focad), found in Danio rerio (Zebrafish).